The primary structure comprises 596 residues: Proton channel OTOP3 (596 aa).

The span at 1–21 (MGRGARAAAAQSRWGRASRAS) shows a compositional bias: low complexity. Residues 1–59 (MGRGARAAAAQSRWGRASRASVSPGRTIRSAPAVGEAQETEAAPEKENRVDVGAEERAA) are disordered. The Cytoplasmic segment spans residues 1 to 88 (MGRGARAAAA…RDRQAQKAGQ (88 aa)). Ser21 and Ser23 each carry phosphoserine. The span at 43-59 (APEKENRVDVGAEERAA) shows a compositional bias: basic and acidic residues. The chain crosses the membrane as a helical span at residues 89–109 (LFSGLLALNVVFLGGAFICSM). Residues 110–119 (IFNKVAVTLG) are Extracellular-facing. The chain crosses the membrane as a helical span at residues 120–143 (DVWILLATLKVLSLLWLLYYVAST). The Cytoplasmic portion of the chain corresponds to 144 to 159 (TRRPHAVLYQDPHAGP). A helical transmembrane segment spans residues 160–181 (LWVRGSLVLFGSCTFCLNIFRV). At 182–193 (GYDVSHIRCKSQ) the chain is on the extracellular side. The chain crosses the membrane as a helical span at residues 194-217 (LDLVFSVIEMVFIGVQTWVLWKHC). Residues 218–225 (KDCVRVQT) are Cytoplasmic-facing. Residues 226–248 (NFTRCGLMLTLATNLLLWVLAVT) traverse the membrane as a helical segment. The Extracellular segment spans residues 249–295 (NDSMHREIEAELGILMEKSTGNETNTCLCLNATACEAFRRGFLMLYP). Residues 296–312 (FSTEYCLICCAVLFVMW) form a helical membrane-spanning segment. Topologically, residues 313-338 (KNVGRHVAPHMGAHPATAPFHLHGAI) are cytoplasmic. The chain crosses the membrane as a helical span at residues 339–358 (FGPLLGLLVLLAGVCVFVLF). Over 359–372 (QIEASGPAIACQYF) the chain is Extracellular. A helical transmembrane segment spans residues 373-395 (TLYYAFYVAVLPTMSLACLAGTA). Over 396–413 (IHGLEERELDTVKNPTRS) the chain is Cytoplasmic. A helical membrane pass occupies residues 414–435 (LDVVLLMGAALGQMGIAYFSIV). Topologically, residues 436 to 446 (AIVAKRPHELL) are extracellular. The chain crosses the membrane as a helical span at residues 447–469 (NRLILAYSLLLILQHIAQNLFII). Residues 470–529 (EGLHRRPLWETVPEGLAGKQEAEPPRRGSLLELGQGLQRASLAYIHSYSHLNWKRRALKE) lie on the Cytoplasmic side of the membrane. The helical transmembrane segment at 530–547 (ISLFLILCNITLWMMPAF) threads the bilayer. The Extracellular segment spans residues 548–566 (GIHPEFENGLEKDFYGYQI). A helical transmembrane segment spans residues 567 to 589 (WFAIVNFGLPLGVFYRMHSVGGL). Over 590-596 (VEVYLGA) the chain is Cytoplasmic.

It belongs to the otopetrin family. In terms of assembly, homodimer.

It localises to the cell membrane. It carries out the reaction H(+)(in) = H(+)(out). With respect to regulation, activated by extracellular acidification. Activated by Zn(2+) under non-acidic conditions. Functionally, proton-selective channel gated by extracellular protons. The sequence is that of Proton channel OTOP3 from Homo sapiens (Human).